The sequence spans 877 residues: Probable sulfate permease C3H7.02 (877 aa).

A run of 13 helical transmembrane segments spans residues 133 to 153, 161 to 181, 186 to 206, 221 to 241, 243 to 263, 292 to 312, 329 to 349, 384 to 404, 424 to 444, 461 to 481, 484 to 504, 518 to 538, and 543 to 563; these read WLVY…PQGM, LPAQ…CIFA, VSIG…ANVQ, LALL…GFII, FIPV…IMAG, LPHT…LYLV, VFFL…TAIS, LCAD…LEHI, LIAM…PATG, LGGI…TGAF, IPNA…IIPW, ALIF…NGIY, and LSAA…LGIL. Residues 594–747 enclose the STAS domain; it reads NLTVRDPPAG…SRSIEVGSAA (154 aa). Disordered stretches follow at residues 643–663 and 793–821; these read KASD…APEV and ADSD…TFSH. Positions 801 to 821 are enriched in basic and acidic residues; the sequence is SDDKDKKVEGHRPSQDPTFSH.

It belongs to the SLC26A/SulP transporter (TC 2.A.53) family.

It localises to the membrane. Its function is as follows. High affinity uptake of sulfate into the cell. The chain is Probable sulfate permease C3H7.02 from Schizosaccharomyces pombe (strain 972 / ATCC 24843) (Fission yeast).